The following is a 155-amino-acid chain: FUN14 domain-containing protein 1 (155 aa).

Over 1–47 (MATRNPPPQDYESDDDSYEVLDLTEYARRHQWWNRVFGHSSGPMVEK) the chain is Cytoplasmic. Ser13 bears the Phosphoserine; by CK2 mark. The residue at position 17 (Ser17) is a Phosphoserine; by ULK1. Tyr18 is subject to Phosphotyrosine; by SRC. Residues 18-21 (YEVL) carry the YXXL motif. A helical membrane pass occupies residues 48–68 (YSVATQIVMGGVTGWCAGFLF). At 69 to 74 (QKVGKL) the chain is on the mitochondrial intermembrane side. Residues 75 to 95 (AATAVGGGFLLLQIASHSGYV) traverse the membrane as a helical segment. Residues 96 to 133 (QIDWKRVEKDVNKAKRQIKKRANKAAPEINNLIEEATE) lie on the Cytoplasmic side of the membrane. Lys119 participates in a covalent cross-link: Glycyl lysine isopeptide (Lys-Gly) (interchain with G-Cter in ubiquitin). A helical membrane pass occupies residues 134 to 154 (FIKQNIVISSGFVGGFLLGLA). Position 155 (Ser155) is a topological domain, mitochondrial intermembrane.

This sequence belongs to the FUN14 family. Interacts (via YXXL motif) with MAP1 LC3 family proteins MAP1LC3A, MAP1LC3B and GABARAP. Interacts with DNM1L/DPR1. Interacts with GPX4. Post-translationally, phosphorylation at Ser-13 by CK2 and at Tyr-18 by SRC inhibits activation of mitophagy. Following hypoxia, dephosphorylated at Tyr-18, leading to interaction with MAP1 LC3 family proteins and triggering mitophagy. Dephosphorylation is mediated by PGAM5. Phosphorylated by ULK1 at Ser-17 which enhances FUNDC1 binding to LC3. In terms of processing, ubiquitinated on Lys-119. Deubiquitinated by USP19; leading to hypoxia-induced DRP1 oligomerization and GTPase activity. In terms of tissue distribution, widely expressed.

It localises to the mitochondrion outer membrane. In terms of biological role, integral mitochondrial outer-membrane protein that mediates the formation of mitochondria-associated endoplasmic reticulum membranes (MAMs). In turn, mediates angiogenesis and neoangiogenesis through interference with intracellular Ca(2+) communication and regulation of the vascular endothelial growth factor receptor KDR/VEGFR2 expression at both mRNA and protein levels. Also acts as an activator of hypoxia-induced mitophagy, an important mechanism for mitochondrial quality and homeostasis, by interacting with and recruiting LC3 protein family to mitochondria. Mechanistically, recruits DRP1 at ER-mitochondria contact sites leading to DRP1 oligomerization and GTPase activity to facilitate mitochondrial fission during hypoxia. Additionally, plays a role in hepatic ferroptosis by interacting directly with glutathione peroxidase/GPX4 to facilitate its recruitment into mitochondria through TOM/TIM complex where it is degraded by mitophagy. This chain is FUN14 domain-containing protein 1 (FUNDC1), found in Homo sapiens (Human).